Consider the following 189-residue polypeptide: Protein Rex (189 aa).

Basic residues predominate over residues 1 to 16 (MPKTRRRPRRSQRKRP). The disordered stretch occupies residues 1-27 (MPKTRRRPRRSQRKRPPTPWPTSQGLD). The Nuclear localization signal, and RNA-binding (RxRE) motif lies at 2 to 18 (PKTRRRPRRSQRKRPPT). Positions 56–70 (RPAYIVTPYWPPVQS) are homomultimerization. Ser-70 carries the phosphoserine; by host modification. Residues 82-93 (LSAQLYSSLSLD) carry the Nuclear export signal motif. The disordered stretch occupies residues 87-189 (YSSLSLDSPP…PPSPGPSCPM (103 aa)). Residues 105–114 (PLRSLPRQSL) are compositionally biased toward low complexity. The segment at 123–131 (PSSRPCANT) is homomultimerization. The span at 143-164 (LGSTSQPCLFQTPDSGPKTCTP) shows a compositional bias: polar residues. Residue Thr-174 is modified to Phosphothreonine; by host. Residue Ser-177 is modified to Phosphoserine; by host. Residues 178-189 (FPPPSPGPSCPM) show a composition bias toward pro residues.

The protein belongs to the deltaretrovirus Rex protein family. Homomultimer. Multimeric assembly is essential for activity and involves XPO1. Binds to human XPO1 and KPNB1. Interacts (via N-terminal nuclear localization signal) with human NPM1. In terms of processing, phosphorylated.

Its subcellular location is the host nucleus. The protein resides in the host nucleolus. It is found in the host cytoplasm. Functionally, rex escorts unspliced gag-pro-pol and singly spliced env mRNAs out of the nucleus of infected cells. These mRNAs carry a recognition sequence called Rex responsive element (RxRE or XRE) located at the 3' region of the long terminal repeat (LTR). This function is essential since most HTLV proteins are translated from unspliced or partially spliced pre-mRNAs that cannot exit the nucleus by the pathway used by fully processed cellular mRNAs. Rex itself is translated from a fully spliced mRNA that probably readily exits the nucleus. Rex's nuclear localization signal (NLS) binds directly to KPNB1/importin beta-1 without previous binding to KPNA1/importin alpha-1. KPNB1 binds to the GDP bound form of RAN (Ran-GDP) and targets Rex to the nucleus. In the nucleus, the conversion from Ran-GDP to Ran-GTP dissociates Rex from KPNB1 and allows Rex's binding to the RRE in viral pre-mRNAs. Rex multimerizes on the RRE via cooperative assembly. This multimerization is critical for its full biological activity, since it may shield the viral RNA from being spliced or down-regulated, and probably exposes Rex's nuclear export signal (NES) to the surface. Rex can then form a complex with XPO1/CRM1, RANBP3 and Ran-GTP, leading to nuclear export of the complex. Conversion from Ran-GTP to Ran-GDP mediates dissociation of the Rex/RRE/XPO1/RANBP3/RAN complex, so that Rex can return to the nucleus for a subsequent round of export. The chain is Protein Rex from Human T-cell leukemia virus 1 (isolate Caribbea HS-35 subtype A) (HTLV-1).